We begin with the raw amino-acid sequence, 795 residues long: Multiple C2 domain and transmembrane region protein 12 (795 aa).

3 consecutive C2 domains span residues 24-142 (RNPR…PQWY), 180-298 (VCAS…SAPA), and 341-463 (YSSD…TCSY). The Ca(2+) site is built by Asn-57, Asp-109, and Asn-113. 4 helical membrane-spanning segments follow: residues 590 to 610 (CTPK…EYYI), 612 to 632 (WLVT…VILL), 730 to 750 (FVLI…CLGW), and 752 to 772 (LHVR…LPWF).

This sequence belongs to the MCTP family. It depends on Ca(2+) as a cofactor. As to expression, expressed in root vascular tissues and meristems. Observed in flowers.

It is found in the endoplasmic reticulum membrane. In terms of biological role, may function as a signaling molecule by regulating the trafficking of other regulators. The sequence is that of Multiple C2 domain and transmembrane region protein 12 from Arabidopsis thaliana (Mouse-ear cress).